The sequence spans 201 residues: Recombination protein RecR (201 aa).

The segment at 60–75 (CSCCGNVDTIDPCTVC) adopts a C4-type zinc-finger fold. Residues 83–178 (SVIIVVEDVA…KITRLAHGVP (96 aa)) form the Toprim domain.

Belongs to the RecR family.

Its function is as follows. May play a role in DNA repair. It seems to be involved in an RecBC-independent recombinational process of DNA repair. It may act with RecF and RecO. This is Recombination protein RecR from Sinorhizobium fredii (strain NBRC 101917 / NGR234).